Here is a 663-residue protein sequence, read N- to C-terminus: DNA ligase (663 aa).

NAD(+) is bound by residues 34–38 (DYEYD), 83–84 (SL), and glutamate 114. The active-site N6-AMP-lysine intermediate is lysine 116. Positions 137, 171, 286, and 310 each coordinate NAD(+). The Zn(2+) site is built by cysteine 404, cysteine 407, cysteine 422, and cysteine 427. A BRCT domain is found at 585 to 663 (TVESPLTGKN…ADEFIKLANG (79 aa)).

The protein belongs to the NAD-dependent DNA ligase family. LigA subfamily. Requires Mg(2+) as cofactor. Mn(2+) is required as a cofactor.

The enzyme catalyses NAD(+) + (deoxyribonucleotide)n-3'-hydroxyl + 5'-phospho-(deoxyribonucleotide)m = (deoxyribonucleotide)n+m + AMP + beta-nicotinamide D-nucleotide.. Its function is as follows. DNA ligase that catalyzes the formation of phosphodiester linkages between 5'-phosphoryl and 3'-hydroxyl groups in double-stranded DNA using NAD as a coenzyme and as the energy source for the reaction. It is essential for DNA replication and repair of damaged DNA. In Brachyspira hyodysenteriae (strain ATCC 49526 / WA1), this protein is DNA ligase.